The sequence spans 196 residues: tRNA(Phe) 7-((3-amino-3-carboxypropyl)-4-demethylwyosine(37)-N(4))-methyltransferase 1 (196 aa).

The protein belongs to the TYW3 family.

It catalyses the reaction 4-demethyl-7-[(3S)-3-amino-3-carboxypropyl]wyosine(37) in tRNA(Phe) + S-adenosyl-L-methionine = 7-[(3S)-3-amino-3-carboxypropyl]wyosine(37) in tRNA(Phe) + S-adenosyl-L-homocysteine + H(+). S-adenosyl-L-methionine-dependent methyltransferase that acts as a component of the wyosine derivatives biosynthesis pathway. Probably methylates N-4 position of wybutosine-86 to produce wybutosine-72. The polypeptide is tRNA(Phe) 7-((3-amino-3-carboxypropyl)-4-demethylwyosine(37)-N(4))-methyltransferase 1 (Pyrococcus horikoshii (strain ATCC 700860 / DSM 12428 / JCM 9974 / NBRC 100139 / OT-3)).